The sequence spans 295 residues: ATP synthase gamma chain (295 aa).

It belongs to the ATPase gamma chain family. F-type ATPases have 2 components, CF(1) - the catalytic core - and CF(0) - the membrane proton channel. CF(1) has five subunits: alpha(3), beta(3), gamma(1), delta(1), epsilon(1). CF(0) has three main subunits: a, b and c.

It localises to the cell inner membrane. Its function is as follows. Produces ATP from ADP in the presence of a proton gradient across the membrane. The gamma chain is believed to be important in regulating ATPase activity and the flow of protons through the CF(0) complex. This Maricaulis maris (strain MCS10) (Caulobacter maris) protein is ATP synthase gamma chain.